The sequence spans 248 residues: PF03932 family protein CutC (248 aa).

This sequence belongs to the CutC family. In terms of assembly, homodimer.

It localises to the cytoplasm. This Escherichia coli O9:H4 (strain HS) protein is PF03932 family protein CutC.